Reading from the N-terminus, the 163-residue chain is Photosystem II extrinsic protein V (163 aa).

The first 26 residues, 1-26 (MLKRSSWLATLLGLLTVASVSTIVYA), serve as a signal peptide directing secretion. The heme c site is built by C63, C66, H67, and H118.

This sequence belongs to the cytochrome c family. PsbV subfamily. PSII is composed of 1 copy each of membrane proteins PsbA, PsbB, PsbC, PsbD, PsbE, PsbF, PsbH, PsbI, PsbJ, PsbK, PsbL, PsbM, PsbT, PsbY, PsbZ, Psb30/Ycf12, at least 3 peripheral proteins of the oxygen-evolving complex and a large number of cofactors. It forms dimeric complexes. The extrinsic subunits in red algae are PsbO (OEC33), PsbQ', cytochrome c-550 and PsbU. It depends on heme c as a cofactor.

Its subcellular location is the plastid. It is found in the chloroplast thylakoid membrane. In terms of biological role, one of the extrinsic, lumenal subunits of photosystem II (PSII). PSII is a light-driven water plastoquinone oxidoreductase, using light energy to abstract electrons from H(2)O, generating a proton gradient subsequently used for ATP formation. The extrinsic proteins stabilize the structure of photosystem II oxygen-evolving complex (OEC), the ion environment of oxygen evolution and protect the OEC against heat-induced inactivation. This Porphyra purpurea (Red seaweed) protein is Photosystem II extrinsic protein V.